The chain runs to 435 residues: D-aminoacyl-tRNA deacylase (435 aa).

The protein belongs to the DtdA deacylase family. In terms of assembly, monomer. Zn(2+) serves as cofactor.

The enzyme catalyses a D-aminoacyl-tRNA + H2O = a tRNA + a D-alpha-amino acid + H(+). It catalyses the reaction glycyl-tRNA(Ala) + H2O = tRNA(Ala) + glycine + H(+). Its function is as follows. D-aminoacyl-tRNA deacylase with broad substrate specificity. By recycling D-aminoacyl-tRNA to D-amino acids and free tRNA molecules, this enzyme counteracts the toxicity associated with the formation of D-aminoacyl-tRNA entities in vivo. The chain is D-aminoacyl-tRNA deacylase from Methanosphaerula palustris (strain ATCC BAA-1556 / DSM 19958 / E1-9c).